The chain runs to 135 residues: Transcriptional regulator HosA (135 aa).

The region spanning 4–134 (RNKAFHQLRQ…FMQLVRKMMN (131 aa)) is the HTH marR-type domain. The H-T-H motif DNA-binding region spans 48–71 (QVALIEAAVSTKATLAEMLARMEN).

Involved in the temperature-dependent positive control of flagellum-driven swimming motility and cellular aggregation. Regulates fliC expression by directly interacting with fliC promoter. The sequence is that of Transcriptional regulator HosA (hosA) from Escherichia coli O111:H-.